A 279-amino-acid chain; its full sequence is MDTELLKTFLEVSRTRHFGRAAESLYLTQSAVSFRIRQLENQLGVNLFTRHRNNIRLTAAGEKLLPYAEMLMSTWQAARKEVAHTSRHNEFSIGASASLWECMLNQWLGRLYQNQDAHTGLQFEARIAQRQSLVKQLHERQLDLLITTEAPKMDEFSSQLLGYFTLALYTSAPSKLKGDLNYLRLEWGPDFQQHEAGLIGADEVPILTTSSAELAQQQIAMLNGCTWLPVSWARKKGGLHTVVDSTTLSRPLYAIWLQNSDKNALIRDLLKINVLDEVY.

In terms of domain architecture, HTH lysR-type spans 1–58; the sequence is MDTELLKTFLEVSRTRHFGRAAESLYLTQSAVSFRIRQLENQLGVNLFTRHRNNIRLT. Residues 18–37 constitute a DNA-binding region (H-T-H motif); that stretch reads FGRAAESLYLTQSAVSFRIR.

The protein belongs to the LysR transcriptional regulatory family.

Negatively regulates the transcription of the flagellar master operon flhDC by binding to the upstream region of the operon. This chain is HTH-type transcriptional regulator HdfR, found in Shigella boydii serotype 18 (strain CDC 3083-94 / BS512).